Consider the following 144-residue polypeptide: Large ribosomal subunit protein uL15 (144 aa).

The interval 1 to 60 (MKMNTLKPAEGSKQSPKRLGRGIGSGLGKTGGRGHKGQTSRSGGTIRPGFEGGQQPLQRR) is disordered. Residues 21–31 (RGIGSGLGKTG) are compositionally biased toward gly residues.

Belongs to the universal ribosomal protein uL15 family. Part of the 50S ribosomal subunit.

Its function is as follows. Binds to the 23S rRNA. This is Large ribosomal subunit protein uL15 from Hahella chejuensis (strain KCTC 2396).